A 125-amino-acid chain; its full sequence is uncharacterized protein (125 aa).

The chain crosses the membrane as a helical span at residues 10–26 (IIILVCLMFLAIMVYIY).

Its subcellular location is the membrane. This is an uncharacterized protein from Rickettsia prowazekii (strain Madrid E).